A 208-amino-acid polypeptide reads, in one-letter code: Orotidine 5'-phosphate decarboxylase (208 aa).

Residues Asp-7, Lys-29, 57-66 (DLKLADIPNT), Ser-109, 162-172 (PGIGAQGGKAK), Gly-185, and Arg-186 each bind substrate. Lys-59 (proton donor) is an active-site residue.

This sequence belongs to the OMP decarboxylase family. Type 1 subfamily. In terms of assembly, homodimer.

The enzyme catalyses orotidine 5'-phosphate + H(+) = UMP + CO2. It functions in the pathway pyrimidine metabolism; UMP biosynthesis via de novo pathway; UMP from orotate: step 2/2. Functionally, catalyzes the decarboxylation of orotidine 5'-monophosphate (OMP) to uridine 5'-monophosphate (UMP). The protein is Orotidine 5'-phosphate decarboxylase (pyrF) of Pyrococcus horikoshii (strain ATCC 700860 / DSM 12428 / JCM 9974 / NBRC 100139 / OT-3).